A 427-amino-acid polypeptide reads, in one-letter code: Serine--tRNA ligase (427 aa).

231 to 233 (TAE) is a binding site for L-serine. 262 to 264 (RSE) is an ATP binding site. Residue glutamate 285 participates in L-serine binding. Residue 349-352 (EISS) participates in ATP binding. Position 385 (serine 385) interacts with L-serine.

Belongs to the class-II aminoacyl-tRNA synthetase family. Type-1 seryl-tRNA synthetase subfamily. Homodimer. The tRNA molecule binds across the dimer.

Its subcellular location is the cytoplasm. The catalysed reaction is tRNA(Ser) + L-serine + ATP = L-seryl-tRNA(Ser) + AMP + diphosphate + H(+). It catalyses the reaction tRNA(Sec) + L-serine + ATP = L-seryl-tRNA(Sec) + AMP + diphosphate + H(+). It functions in the pathway aminoacyl-tRNA biosynthesis; selenocysteinyl-tRNA(Sec) biosynthesis; L-seryl-tRNA(Sec) from L-serine and tRNA(Sec): step 1/1. Its function is as follows. Catalyzes the attachment of serine to tRNA(Ser). Is also able to aminoacylate tRNA(Sec) with serine, to form the misacylated tRNA L-seryl-tRNA(Sec), which will be further converted into selenocysteinyl-tRNA(Sec). The polypeptide is Serine--tRNA ligase (Exiguobacterium sp. (strain ATCC BAA-1283 / AT1b)).